The chain runs to 410 residues: Argininosuccinate synthase (410 aa).

ATP contacts are provided by residues 14-22 and Ala41; that span reads AYSGGLDTS. L-citrulline is bound by residues Tyr92 and Ser97. Position 122 (Gly122) interacts with ATP. L-aspartate-binding residues include Thr124, Asn128, and Asp129. Asn128 contacts L-citrulline. Positions 132, 183, 192, 268, and 280 each coordinate L-citrulline.

The protein belongs to the argininosuccinate synthase family. Type 1 subfamily. Homotetramer.

Its subcellular location is the cytoplasm. It carries out the reaction L-citrulline + L-aspartate + ATP = 2-(N(omega)-L-arginino)succinate + AMP + diphosphate + H(+). It functions in the pathway amino-acid biosynthesis; L-arginine biosynthesis; L-arginine from L-ornithine and carbamoyl phosphate: step 2/3. This chain is Argininosuccinate synthase, found in Parvibaculum lavamentivorans (strain DS-1 / DSM 13023 / NCIMB 13966).